The chain runs to 260 residues: tRNA pseudouridine synthase C (260 aa).

Asp-54 is a catalytic residue.

This sequence belongs to the pseudouridine synthase RluA family.

The enzyme catalyses uridine(65) in tRNA = pseudouridine(65) in tRNA. Responsible for synthesis of pseudouridine from uracil-65 in transfer RNAs. The protein is tRNA pseudouridine synthase C (truC) of Salmonella typhimurium (strain LT2 / SGSC1412 / ATCC 700720).